The sequence spans 430 residues: Adenylosuccinate synthetase (430 aa).

Residues 12 to 18 (GDEGKGK) and 40 to 42 (GHT) each bind GTP. D13 serves as the catalytic Proton acceptor. The Mg(2+) site is built by D13 and G40. Residues 13–16 (DEGK), 38–41 (NAGH), T128, R142, Q223, T238, and R302 contribute to the IMP site. H41 serves as the catalytic Proton donor. Residue 298-304 (TTTGRPR) participates in substrate binding. GTP-binding positions include R304, 330 to 332 (SID), and 412 to 414 (SVG).

The protein belongs to the adenylosuccinate synthetase family. Homodimer. Mg(2+) is required as a cofactor.

It localises to the cytoplasm. It catalyses the reaction IMP + L-aspartate + GTP = N(6)-(1,2-dicarboxyethyl)-AMP + GDP + phosphate + 2 H(+). It functions in the pathway purine metabolism; AMP biosynthesis via de novo pathway; AMP from IMP: step 1/2. Its function is as follows. Plays an important role in the de novo pathway of purine nucleotide biosynthesis. Catalyzes the first committed step in the biosynthesis of AMP from IMP. This Streptococcus agalactiae serotype III (strain NEM316) protein is Adenylosuccinate synthetase.